The primary structure comprises 272 residues: Short-chain dehydrogenase/reductase iacC (272 aa).

Ile-13, Asp-59, and Asn-88 together coordinate NADP(+). Residues Ser-150 and Tyr-169 each act as proton donor in the active site. Positions 169, 173, and 202 each coordinate NADP(+). The Lowers pKa of active site Tyr role is filled by Lys-173.

It belongs to the short-chain dehydrogenases/reductases (SDR) family.

Its pathway is secondary metabolite biosynthesis. Short-chain dehydrogenase/reductase; part of the gene cluster that mediates the biosynthesis of iso-A82775C, a enylepoxycyclohexane and biosynthetic precursor of the chloropestolide anticancer natural products. Within the cluster, the prenyltransferase iacE prenylates siccayne to generate pestalodiol E, using dimethylallyl diphosphate (DMAPP) as cosubstrate. The probable oxidoreductase iacF is then involved in the epoxidation of pestalodiol F to pestalodiol F, which is further converted to pestalofone A by the short-chain dehydrogenase/reductase iacG. Iso-A82775C is subsequently generated from pestalofone A by the short-chain dehydrogenase/reductase iacC. Iso-A82775C is further condensed with maldoxin via a Diels-Alder reaction to produce the anticancer natural products chloropestolides A to E. The polypeptide is Short-chain dehydrogenase/reductase iacC (Pestalotiopsis fici (strain W106-1 / CGMCC3.15140)).